A 243-amino-acid polypeptide reads, in one-letter code: Voltage-gated monoatomic cation channel TMEM109 (243 aa).

The N-terminal stretch at 1–33 (MAGAHSNPSWSRHLFKAVLMVLGALLLVHSASA) is a signal peptide. Residues 34-83 (QTHREFASPGQQKRESSADILTEIGRSLKETLDTWLGPETMHVISETLLQ) are Lumenal-facing. The helical transmembrane segment at 84 to 104 (VMWAISSAISVACFALSGIAA) threads the bilayer. Residues 105-135 (QLLSALGLDGEQLTQVLKLSPSQVQTLLLWG) are Cytoplasmic-facing. A helical transmembrane segment spans residues 136–156 (AAALVIYWLLSLLLGLVLALL). Topologically, residues 157–185 (GRILGGLKLVLFVAGFVGLVRSVPDPSTR) are lumenal. A helical membrane pass occupies residues 186-205 (ALLLLALLTVFALLSRLTGS). The Cytoplasmic segment spans residues 206–243 (RSSGTHLEAKVRGLERQIEELRGRQRRAAKIPRSMEEE).

Homooligomer. Interacts with CRYAB; in the cellular response to DNA damage.

It is found in the nucleus outer membrane. The protein resides in the endoplasmic reticulum membrane. The protein localises to the sarcoplasmic reticulum membrane. It catalyses the reaction K(+)(in) = K(+)(out). It carries out the reaction Ca(2+)(in) = Ca(2+)(out). In terms of biological role, functions as a voltage-gated monoatomic cation channel permeable to both potassium and calcium. Plays a role in the cellular response to DNA damage. The chain is Voltage-gated monoatomic cation channel TMEM109 from Rattus norvegicus (Rat).